The following is a 217-amino-acid chain: Coiled-coil domain-containing protein 124-A (217 aa).

A disordered region spans residues 1–128 (MPKKFQGENT…HLEMPLEENV (128 aa)). Composition is skewed to basic and acidic residues over residues 18-45 (RKAEAKAVSDGKRQKEIEDAYWQDDDKH), 52-74 (RKEDKEKKRLEQLERKKESQRLL), and 95-128 (TRAEIEETLCKEEEHKATTEKPKTHLEMPLEENV). Residues 46 to 82 (VARKGQRKEDKEKKRLEQLERKKESQRLLDEEDSKMK) are a coiled coil.

It belongs to the CCDC124 family. As to quaternary structure, associates with translationally inactive ribosomes in the nonrotated state.

The protein resides in the cytoplasm. It localises to the cytoskeleton. It is found in the microtubule organizing center. Its subcellular location is the centrosome. The protein localises to the midbody. Functionally, ribosome-binding protein involved in ribosome hibernation: associates with translationally inactive ribosomes and stabilizes the nonrotated conformation of the 80S ribosome, thereby promoting ribosome preservation and storage. The polypeptide is Coiled-coil domain-containing protein 124-A (ccdc124-a) (Xenopus laevis (African clawed frog)).